Consider the following 308-residue polypeptide: uncharacterized protein (308 aa).

An N-terminal signal peptide occupies residues 1–28; the sequence is MILMKKFEIILFLFIAVLIFVFGYFVGA.

This is an uncharacterized protein from Methanocaldococcus jannaschii (strain ATCC 43067 / DSM 2661 / JAL-1 / JCM 10045 / NBRC 100440) (Methanococcus jannaschii).